Here is a 1943-residue protein sequence, read N- to C-terminus: Beta-L-arabinobiosidase (1943 aa).

The tat-type signal signal peptide spans 1 to 32 (MHHSTRKRWLASIGAVAAVATLATGGAVTAQA). F5/8 type C domains lie at 892-1049 (TNVD…AYNT) and 1142-1302 (SKEI…AYAI). The region spanning 1061 to 1157 (TPQVDAYVSS…HGIPSDGTVN (97 aa)) is the PKD domain. FIVAR domains lie at 1678 to 1716 (ANGL…EQVA), 1746 to 1790 (DAAK…AAVQ), and 1823 to 1864 (QAKK…VDAA). A disordered region spans residues 1875 to 1906 (TKVEQKPGSQQPGVTDTDKDDKDNKGDRVPPT). The segment covering 1890 to 1902 (DTDKDDKDNKGDR) has biased composition (basic and acidic residues). A helical membrane pass occupies residues 1908 to 1928 (AAVSVVAAAAVLLTAAGVTIL).

It belongs to the glycosyl hydrolase 121 family. In terms of processing, predicted to be exported by the Tat system. The position of the signal peptide cleavage has not been experimentally proven.

The protein resides in the membrane. The enzyme catalyses 4-O-(beta-L-arabinofuranosyl-(1-&gt;2)-beta-L-arabinofuranosyl-(1-&gt;2)-beta-L-arabinofuranosyl)-(2S,4S)-4-hydroxyproline + H2O = 4-O-(beta-L-arabinofuranosyl)-(2S,4S)-4-hydroxyproline + beta-L-arabinofuranosyl-(1-&gt;2)-beta-L-arabinofuranose. In terms of biological role, beta-L-arabinobiosidase that removes L-arabinofuranose-beta-1,2-L-arabinofuranose disaccharide from various substrates such as carrot extensin and potato lectin. Also acts on L-arabinofuranose (Ara)-beta-1,2-Ara-beta-1,2-Ara-beta-Hyp (Ara(3)-Hyp) but not on Ara-beta-1,3-Ara-beta-1,2-Ara-beta-1,2-Ara-beta--Hyp (Ara(4)-Hyp) or Ara-beta-1,2-Ara-beta-Hyp (Ara(2)-Hyp), suggesting a specificity for unmodified Ara(3)-Hyp substrate. In the presence of 1-alkanols, shows transglycosylation activity, retaining the anomeric configuration of the arabinofuranose residue. This is Beta-L-arabinobiosidase (hypBA2) from Bifidobacterium longum subsp. longum (strain ATCC 15707 / DSM 20219 / JCM 1217 / NCTC 11818 / E194b).